Here is a 176-residue protein sequence, read N- to C-terminus: Sarcoplasmic calcium-binding protein (176 aa).

The residue at position 1 (Thr-1) is an N-acetylthreonine. EF-hand domains lie at 3–38 (YLVS…FTDL), 55–90 (KWWD…AFLA), 91–126 (TMTA…FGHE), and 127–160 (NESV…SFVT). Asp-16, Asn-18, Asp-20, and Asn-27 together coordinate Ca(2+). The Ca(2+) site is built by Asp-104, Asp-106, Asp-108, Ser-110, and Glu-115.

Functionally, like parvalbumins, SCPs seem to be more abundant in fast contracting muscles, but no functional relationship can be established from this distribution. The polypeptide is Sarcoplasmic calcium-binding protein (Mizuhopecten yessoensis (Japanese scallop)).